The primary structure comprises 408 residues: Histidine--tRNA ligase (408 aa).

Belongs to the class-II aminoacyl-tRNA synthetase family.

The protein resides in the cytoplasm. It carries out the reaction tRNA(His) + L-histidine + ATP = L-histidyl-tRNA(His) + AMP + diphosphate + H(+). The chain is Histidine--tRNA ligase from Methanospirillum hungatei JF-1 (strain ATCC 27890 / DSM 864 / NBRC 100397 / JF-1).